The chain runs to 185 residues: Elongation factor P (185 aa).

This sequence belongs to the elongation factor P family.

The protein localises to the cytoplasm. It participates in protein biosynthesis; polypeptide chain elongation. Its function is as follows. Involved in peptide bond synthesis. Stimulates efficient translation and peptide-bond synthesis on native or reconstituted 70S ribosomes in vitro. Probably functions indirectly by altering the affinity of the ribosome for aminoacyl-tRNA, thus increasing their reactivity as acceptors for peptidyl transferase. This is Elongation factor P from Paraburkholderia xenovorans (strain LB400).